We begin with the raw amino-acid sequence, 508 residues long: Maturase K (508 aa).

It belongs to the intron maturase 2 family. MatK subfamily.

The protein resides in the plastid. Its subcellular location is the chloroplast. In terms of biological role, usually encoded in the trnK tRNA gene intron. Probably assists in splicing its own and other chloroplast group II introns. The chain is Maturase K from Ranunculus trichophyllus (Whitewater crowfoot).